A 335-amino-acid chain; its full sequence is Biotin synthase (335 aa).

One can recognise a Radical SAM core domain in the interval 39–267 (TKIQVCKLIS…ASDVRLSAGR (229 aa)). [4Fe-4S] cluster is bound by residues Cys-54, Cys-58, and Cys-61. [2Fe-2S] cluster is bound by residues Cys-98, Cys-130, Cys-190, and Arg-262.

The protein belongs to the radical SAM superfamily. Biotin synthase family. As to quaternary structure, homodimer. It depends on [4Fe-4S] cluster as a cofactor. [2Fe-2S] cluster serves as cofactor.

The enzyme catalyses (4R,5S)-dethiobiotin + (sulfur carrier)-SH + 2 reduced [2Fe-2S]-[ferredoxin] + 2 S-adenosyl-L-methionine = (sulfur carrier)-H + biotin + 2 5'-deoxyadenosine + 2 L-methionine + 2 oxidized [2Fe-2S]-[ferredoxin]. It functions in the pathway cofactor biosynthesis; biotin biosynthesis; biotin from 7,8-diaminononanoate: step 2/2. In terms of biological role, catalyzes the conversion of dethiobiotin (DTB) to biotin by the insertion of a sulfur atom into dethiobiotin via a radical-based mechanism. This Nostoc punctiforme (strain ATCC 29133 / PCC 73102) protein is Biotin synthase.